The primary structure comprises 477 residues: UDP-N-acetylmuramate--L-alanine ligase (477 aa).

112-118 (GAHGKTT) contacts ATP.

The protein belongs to the MurCDEF family.

The protein resides in the cytoplasm. The enzyme catalyses UDP-N-acetyl-alpha-D-muramate + L-alanine + ATP = UDP-N-acetyl-alpha-D-muramoyl-L-alanine + ADP + phosphate + H(+). Its pathway is cell wall biogenesis; peptidoglycan biosynthesis. In terms of biological role, cell wall formation. The chain is UDP-N-acetylmuramate--L-alanine ligase from Acidovorax ebreus (strain TPSY) (Diaphorobacter sp. (strain TPSY)).